The primary structure comprises 366 residues: Quinolinate synthase (366 aa).

Residues histidine 44 and serine 61 each contribute to the iminosuccinate site. Position 108 (cysteine 108) interacts with [4Fe-4S] cluster. Iminosuccinate is bound by residues 139-141 (YVN) and serine 160. Cysteine 228 is a binding site for [4Fe-4S] cluster. Iminosuccinate-binding positions include 254 to 256 (HPE) and threonine 271. A [4Fe-4S] cluster-binding site is contributed by cysteine 318.

This sequence belongs to the quinolinate synthase family. Type 3 subfamily. [4Fe-4S] cluster serves as cofactor.

Its subcellular location is the cytoplasm. It carries out the reaction iminosuccinate + dihydroxyacetone phosphate = quinolinate + phosphate + 2 H2O + H(+). Its pathway is cofactor biosynthesis; NAD(+) biosynthesis; quinolinate from iminoaspartate: step 1/1. In terms of biological role, catalyzes the condensation of iminoaspartate with dihydroxyacetone phosphate to form quinolinate. This chain is Quinolinate synthase, found in Staphylococcus carnosus (strain TM300).